A 263-amino-acid polypeptide reads, in one-letter code: 5'-nucleotidase SurE (263 aa).

4 residues coordinate a divalent metal cation: aspartate 8, aspartate 9, serine 40, and asparagine 98.

This sequence belongs to the SurE nucleotidase family. It depends on a divalent metal cation as a cofactor.

The protein resides in the cytoplasm. It catalyses the reaction a ribonucleoside 5'-phosphate + H2O = a ribonucleoside + phosphate. Nucleotidase that shows phosphatase activity on nucleoside 5'-monophosphates. The polypeptide is 5'-nucleotidase SurE (Gloeobacter violaceus (strain ATCC 29082 / PCC 7421)).